We begin with the raw amino-acid sequence, 209 residues long: PRA1 family protein A3 (209 aa).

Helical transmembrane passes span 51 to 72 (LYYY…ALIT), 76 to 98 (AILG…AATF), 143 to 163 (LVFV…SCGL), and 164 to 184 (LWVL…ASLR).

Belongs to the PRA1 family.

The protein localises to the endosome membrane. Its function is as follows. May be involved in both secretory and endocytic intracellular trafficking in the endosomal/prevacuolar compartments. In Arabidopsis thaliana (Mouse-ear cress), this protein is PRA1 family protein A3 (PRA1A3).